The following is a 232-amino-acid chain: Protein FAM246B (232 aa).

The segment covering 19–31 has biased composition (basic and acidic residues); sequence EVLRRVTGRRRDP. Disordered stretches follow at residues 19–47, 80–101, 151–179, and 191–232; these read EVLR…RAPG, AAGA…VCGE, ALLP…GPTL, and AASR…GGGD. Basic residues predominate over residues 211-220; the sequence is APARKNHKKM.

The protein belongs to the FAM246 family.

The sequence is that of Protein FAM246B from Homo sapiens (Human).